Reading from the N-terminus, the 121-residue chain is Holo-[acyl-carrier-protein] synthase (121 aa).

The Mg(2+) site is built by Asp8 and Glu58.

Belongs to the P-Pant transferase superfamily. AcpS family. The cofactor is Mg(2+).

It localises to the cytoplasm. The catalysed reaction is apo-[ACP] + CoA = holo-[ACP] + adenosine 3',5'-bisphosphate + H(+). Transfers the 4'-phosphopantetheine moiety from coenzyme A to a Ser of acyl-carrier-protein. The chain is Holo-[acyl-carrier-protein] synthase from Bacillus pumilus (strain SAFR-032).